The primary structure comprises 350 residues: D-alanine--D-alanine ligase (350 aa).

The ATP-grasp domain maps to 133 to 334 (NDIFELNKIP…VSEVFDNLIG (202 aa)). 161–216 (FEKTSKAVYVKPCNAGSSVGVMRAETEEELEKAIQNAFQYDRRILVEEEIIGPELQ) is an ATP binding site. 3 residues coordinate Mg(2+): Asp-288, Glu-300, and Asn-302.

The protein belongs to the D-alanine--D-alanine ligase family. The cofactor is Mg(2+). Mn(2+) serves as cofactor.

Its subcellular location is the cytoplasm. The catalysed reaction is 2 D-alanine + ATP = D-alanyl-D-alanine + ADP + phosphate + H(+). It participates in cell wall biogenesis; peptidoglycan biosynthesis. Its function is as follows. Cell wall formation. The protein is D-alanine--D-alanine ligase of Finegoldia magna (strain ATCC 29328 / DSM 20472 / WAL 2508) (Peptostreptococcus magnus).